A 203-amino-acid chain; its full sequence is Probable cytochrome c oxidase subunit 3 (203 aa).

The next 5 helical transmembrane spans lie at 30–50 (IVWLSSELMFFAGLFAFYFSA), 71–91 (VPVTLVLIASSFTCQMGVFAA), 96–116 (IFGLRRWYVITFLMGLFFVLG), 143–163 (ATGFHGLHVTGGLIAFIFLLV), and 179–199 (IVVSYYWHFVDIVWIALFTVI).

It belongs to the cytochrome c oxidase subunit 3 family.

The protein resides in the cell membrane. The catalysed reaction is 4 Fe(II)-[cytochrome c] + O2 + 8 H(+)(in) = 4 Fe(III)-[cytochrome c] + 2 H2O + 4 H(+)(out). The protein is Probable cytochrome c oxidase subunit 3 (ctaE) of Mycobacterium bovis (strain ATCC BAA-935 / AF2122/97).